We begin with the raw amino-acid sequence, 605 residues long: Poly(3-hydroxyalkanoate) polymerase (605 aa).

An AB hydrolase-1 domain is found at 319–527; it reads IETAIDMIGV…VLAGSGHIAG (209 aa). Residue C341 is part of the active site.

It belongs to the PHA/PHB synthase family.

It is found in the cytoplasm. The protein is Poly(3-hydroxyalkanoate) polymerase (phaC) of Methylorubrum extorquens (Methylobacterium dichloromethanicum).